A 211-amino-acid polypeptide reads, in one-letter code: ATP phosphoribosyltransferase (211 aa).

It belongs to the ATP phosphoribosyltransferase family. Short subfamily. Heteromultimer composed of HisG and HisZ subunits.

The protein resides in the cytoplasm. The enzyme catalyses 1-(5-phospho-beta-D-ribosyl)-ATP + diphosphate = 5-phospho-alpha-D-ribose 1-diphosphate + ATP. The protein operates within amino-acid biosynthesis; L-histidine biosynthesis; L-histidine from 5-phospho-alpha-D-ribose 1-diphosphate: step 1/9. Functionally, catalyzes the condensation of ATP and 5-phosphoribose 1-diphosphate to form N'-(5'-phosphoribosyl)-ATP (PR-ATP). Has a crucial role in the pathway because the rate of histidine biosynthesis seems to be controlled primarily by regulation of HisG enzymatic activity. The sequence is that of ATP phosphoribosyltransferase from Bacillus cereus (strain AH187).